A 504-amino-acid polypeptide reads, in one-letter code: Anaerobic nitric oxide reductase transcription regulator NorR (504 aa).

D57 carries the 4-aspartylphosphate modification. Positions 187–416 constitute a Sigma-54 factor interaction domain; the sequence is MIGLSPGMTQ…LEHAIHRAVV (230 aa). ATP contacts are provided by residues 215-222 and 278-287; these read GETGTGKE and ADNGTLFLDE. Residues 479-498 constitute a DNA-binding region (H-T-H motif); the sequence is WAACARMLETDVANLHRLAK.

It participates in nitrogen metabolism; nitric oxide reduction. Required for the expression of anaerobic nitric oxide (NO) reductase, acts as a transcriptional activator for at least the norVW operon. Activation also requires sigma-54. This Escherichia coli (strain ATCC 8739 / DSM 1576 / NBRC 3972 / NCIMB 8545 / WDCM 00012 / Crooks) protein is Anaerobic nitric oxide reductase transcription regulator NorR.